A 1186-amino-acid polypeptide reads, in one-letter code: ATP-dependent helicase/nuclease subunit A (1186 aa).

A UvrD-like helicase ATP-binding domain is found at 2 to 460 (NFSKNQRAVI…IELSENYRSQ (459 aa)). Residue 23 to 30 (ASAGSGKT) coordinates ATP. One can recognise a UvrD-like helicase C-terminal domain in the interval 487–771 (DVELKAANRD…SVMTIHAAKG (285 aa)).

Belongs to the helicase family. AddA subfamily. In terms of assembly, heterodimer of AddA and AddB/RexB. Mg(2+) serves as cofactor.

It carries out the reaction Couples ATP hydrolysis with the unwinding of duplex DNA by translocating in the 3'-5' direction.. It catalyses the reaction ATP + H2O = ADP + phosphate + H(+). In terms of biological role, the heterodimer acts as both an ATP-dependent DNA helicase and an ATP-dependent, dual-direction single-stranded exonuclease. Recognizes the chi site generating a DNA molecule suitable for the initiation of homologous recombination. The AddA nuclease domain is required for chi fragment generation; this subunit has the helicase and 3' -&gt; 5' nuclease activities. The chain is ATP-dependent helicase/nuclease subunit A from Oenococcus oeni (strain ATCC BAA-331 / PSU-1).